Reading from the N-terminus, the 205-residue chain is Urease accessory protein UreG (205 aa).

10-17 (GPVGAGKT) lines the GTP pocket.

It belongs to the SIMIBI class G3E GTPase family. UreG subfamily. In terms of assembly, homodimer. UreD, UreF and UreG form a complex that acts as a GTP-hydrolysis-dependent molecular chaperone, activating the urease apoprotein by helping to assemble the nickel containing metallocenter of UreC. The UreE protein probably delivers the nickel.

Its subcellular location is the cytoplasm. Its function is as follows. Facilitates the functional incorporation of the urease nickel metallocenter. This process requires GTP hydrolysis, probably effectuated by UreG. This is Urease accessory protein UreG from Corynebacterium glutamicum (strain ATCC 13032 / DSM 20300 / JCM 1318 / BCRC 11384 / CCUG 27702 / LMG 3730 / NBRC 12168 / NCIMB 10025 / NRRL B-2784 / 534).